Here is a 55-residue protein sequence, read N- to C-terminus: uncharacterized protein (55 aa).

This is an uncharacterized protein from Rickettsia prowazekii (strain Madrid E).